Here is a 40-residue protein sequence, read N- to C-terminus: Photosystem II reaction center protein J (40 aa).

Residues 8-28 (IPLWLVGTVTGIPVIGLIGVF) form a helical membrane-spanning segment.

It belongs to the PsbJ family. As to quaternary structure, PSII is composed of 1 copy each of membrane proteins PsbA, PsbB, PsbC, PsbD, PsbE, PsbF, PsbH, PsbI, PsbJ, PsbK, PsbL, PsbM, PsbT, PsbX, PsbY, PsbZ, Psb30/Ycf12, at least 3 peripheral proteins of the oxygen-evolving complex and a large number of cofactors. It forms dimeric complexes.

It localises to the plastid. It is found in the chloroplast thylakoid membrane. One of the components of the core complex of photosystem II (PSII). PSII is a light-driven water:plastoquinone oxidoreductase that uses light energy to abstract electrons from H(2)O, generating O(2) and a proton gradient subsequently used for ATP formation. It consists of a core antenna complex that captures photons, and an electron transfer chain that converts photonic excitation into a charge separation. The chain is Photosystem II reaction center protein J from Musa acuminata (Banana).